A 68-amino-acid chain; its full sequence is Copper transport protein ATOX1 (68 aa).

An HMA domain is found at 1–63 (MPKHEFSVDM…TLNKTGKAVS (63 aa)). Cu cation-binding residues include C12 and C15. S47 is modified (phosphoserine). Position 60 is an N6-acetyllysine (K60).

The protein belongs to the ATX1 family. In terms of assembly, homodimer. Interacts with ATP7B. Interacts with ATP7A. Interacts (via dimer form) with SLC31A1 (via C-terminal domain); this interaction improves ATOX1 stability and controls intracellular Cu(I) levels.

Its function is as follows. Binds and deliver cytosolic copper to the copper ATPase proteins. May be important in cellular antioxidant defense. The chain is Copper transport protein ATOX1 from Rattus norvegicus (Rat).